The sequence spans 141 residues: ATP synthase epsilon chain (141 aa).

It belongs to the ATPase epsilon chain family. F-type ATPases have 2 components, CF(1) - the catalytic core - and CF(0) - the membrane proton channel. CF(1) has five subunits: alpha(3), beta(3), gamma(1), delta(1), epsilon(1). CF(0) has three main subunits: a, b and c.

It is found in the cell inner membrane. Produces ATP from ADP in the presence of a proton gradient across the membrane. This is ATP synthase epsilon chain from Desulfatibacillum aliphaticivorans.